The chain runs to 505 residues: Sucrose porin (505 aa).

The signal sequence occupies residues 1–22 (MYKKRKLAILIALLTGTAAAHG). Residues 44–94 (ETRASTAESRAASAEQKVQQLTQQQQQTQATTQQVARRTTQLEEKAERPGG) form a disordered region. Residues 46-82 (RASTAESRAASAEQKVQQLTQQQQQTQATTQQVARRT) are compositionally biased toward low complexity. Basic and acidic residues predominate over residues 83-93 (TQLEEKAERPG).

Belongs to the porin LamB (TC 1.B.3) family. As to quaternary structure, homotrimer.

It is found in the cell outer membrane. Functionally, porin for sucrose uptake. The chain is Sucrose porin (scrY) from Klebsiella pneumoniae.